The following is a 220-amino-acid chain: Thiopurine S-methyltransferase (220 aa).

Residues tryptophan 10, leucine 45, glutamate 66, and arginine 123 each coordinate S-adenosyl-L-methionine.

It belongs to the class I-like SAM-binding methyltransferase superfamily. TPMT family.

Its subcellular location is the cytoplasm. It carries out the reaction S-adenosyl-L-methionine + a thiopurine = S-adenosyl-L-homocysteine + a thiopurine S-methylether.. The sequence is that of Thiopurine S-methyltransferase from Pseudomonas syringae pv. syringae (strain B728a).